Here is a 228-residue protein sequence, read N- to C-terminus: Ribose-5-phosphate isomerase A (228 aa).

Residues 32 to 35 (TGST), 85 to 88 (DGAD), and 98 to 101 (KGGG) each bind substrate. The Proton acceptor role is filled by glutamate 107. Lysine 125 is a binding site for substrate.

This sequence belongs to the ribose 5-phosphate isomerase family. As to quaternary structure, homodimer.

It carries out the reaction aldehydo-D-ribose 5-phosphate = D-ribulose 5-phosphate. Its pathway is carbohydrate degradation; pentose phosphate pathway; D-ribose 5-phosphate from D-ribulose 5-phosphate (non-oxidative stage): step 1/1. Functionally, catalyzes the reversible conversion of ribose-5-phosphate to ribulose 5-phosphate. The polypeptide is Ribose-5-phosphate isomerase A (Ralstonia nicotianae (strain ATCC BAA-1114 / GMI1000) (Ralstonia solanacearum)).